The primary structure comprises 166 residues: Regulatory protein RecX (166 aa).

It belongs to the RecX family.

The protein resides in the cytoplasm. Its function is as follows. Modulates RecA activity. This chain is Regulatory protein RecX, found in Shigella boydii serotype 4 (strain Sb227).